A 733-amino-acid polypeptide reads, in one-letter code: Vinexin (733 aa).

Disordered regions lie at residues 1 to 51 (MARI…SNLD), 129 to 165 (TWPG…RQDK), 224 to 285 (SARA…NQVP), and 352 to 448 (ETRL…KRKA). A compositionally biased stretch (basic and acidic residues) spans 32–42 (DPNRVHTKEQL). Residues 147–157 (QHAQNWSATWT) are compositionally biased toward polar residues. The SoHo domain maps to 164–232 (DKRWVKYEGI…VSARASSAEP (69 aa)). 2 stretches are compositionally biased toward polar residues: residues 245–256 (PGTTETSSGRNW) and 264–277 (RNTF…SSSG). A phosphoserine mark is found at Ser412 and Ser459. SH3 domains follow at residues 444-503 (KKRK…VLPA) and 518-579 (LEYG…INRE). A binds to vinculin region spans residues 444–579 (KKRKAARLKF…PASYVQINRE (136 aa)). Positions 584–672 (LCDDGPQLPA…INLGPSSPNT (89 aa)) are disordered. Ser594 bears the Phosphoserine; by MAPK1 mark. Low complexity predominate over residues 597-613 (PTTTAHLSSHSHPSSIP). Ser607, Ser610, and Ser624 each carry phosphoserine. Positions 638 to 651 (EPRSQTQSLNTPGP) are enriched in polar residues. An SH3 3 domain is found at 674–733 (IHWTPYRAMYQYRPQNEDELELREGDRVDVMQQCDDGWFVGVSRRTQKFGTFPGNYVAPV). The binds to SOS stretch occupies residues 674–733 (IHWTPYRAMYQYRPQNEDELELREGDRVDVMQQCDDGWFVGVSRRTQKFGTFPGNYVAPV).

Interacts with vinculin by the first two SH3 domains and the proline rich region of vinculin. Binds to SOS (guanine nucleotide exchange factor of RAS and RAC), through its third SH3 domain. The formation of this complex is down-regulated by phosphorylation of SOS. Interacts with SAFB2, INPPL1/SHIP2 and SRCIN1. Interacts with DLG5 through its third SH3 domain. Interacts with SOCS7 and MAPK1/ERK2. Interacts with FASLG. Post-translationally, phosphorylated at Ser-594 by MAPK1/ERK2 during cell spreading.

Its subcellular location is the cell junction. It is found in the focal adhesion. The protein resides in the cytoplasm. It localises to the cytoskeleton. Promotes up-regulation of actin stress fiber formation. The sequence is that of Vinexin (Sorbs3) from Mus musculus (Mouse).